The chain runs to 792 residues: Probable beta-D-xylosidase 6 (792 aa).

The signal sequence occupies residues 1-18; that stretch reads MNLQLTLISLLFFTSAIA. 4 N-linked (GlcNAc...) asparagine glycosylation sites follow: N44, N104, N124, and N239. D309 is an active-site residue. 2 N-linked (GlcNAc...) asparagine glycosylation sites follow: N444 and N618.

This sequence belongs to the glycosyl hydrolase 3 family.

Its subcellular location is the secreted. It localises to the extracellular space. The protein resides in the extracellular matrix. In Arabidopsis thaliana (Mouse-ear cress), this protein is Probable beta-D-xylosidase 6 (BXL6).